The following is a 544-amino-acid chain: Esterase-6 (544 aa).

A signal peptide spans 1 to 21; the sequence is MNYVGLGLIIVLSCLWLGSNA. N42 carries N-linked (GlcNAc...) asparagine glycosylation. A disulfide bridge connects residues C86 and C105. Residue S209 is the Acyl-ester intermediate of the active site. C261 and C273 are joined by a disulfide. 2 N-linked (GlcNAc...) asparagine glycosylation sites follow: N420 and N456. H466 serves as the catalytic Charge relay system. N506 is a glycosylation site (N-linked (GlcNAc...) asparagine). C514 and C535 are disulfide-bonded.

It belongs to the type-B carboxylesterase/lipase family. Monomer. As to expression, specifically expressed in the ejaculatory bulbs of male.

It is found in the secreted. It catalyses the reaction a carboxylic ester + H2O = an alcohol + a carboxylate + H(+). Functionally, transferred from the ejaculatory bulbs of males to the female genitals upon copulation, plays an important role in the reproductive biology. The polypeptide is Esterase-6 (Est-6) (Drosophila melanogaster (Fruit fly)).